The primary structure comprises 264 residues: Proliferating cell nuclear antigen (264 aa).

A DNA-binding region spans residues R61 to K80.

The protein belongs to the PCNA family.

The protein resides in the nucleus. Functionally, this protein is an auxiliary protein of DNA polymerase delta and is involved in the control of eukaryotic DNA replication by increasing the polymerase's processibility during elongation of the leading strand. This Daucus carota (Wild carrot) protein is Proliferating cell nuclear antigen.